The chain runs to 287 residues: Formamidopyrimidine-DNA glycosylase (287 aa).

Catalysis depends on Pro2, which acts as the Schiff-base intermediate with DNA. Glu3 serves as the catalytic Proton donor. The active-site Proton donor; for beta-elimination activity is Lys58. DNA contacts are provided by His104, Arg123, and Arg166. Residues 251 to 287 form an FPG-type zinc finger; sequence RVYDREGQPCPTPGCKGMIGREVQAGRSTFFCPVCQV. Arg277 functions as the Proton donor; for delta-elimination activity in the catalytic mechanism.

The protein belongs to the FPG family. As to quaternary structure, monomer. The cofactor is Zn(2+).

The enzyme catalyses Hydrolysis of DNA containing ring-opened 7-methylguanine residues, releasing 2,6-diamino-4-hydroxy-5-(N-methyl)formamidopyrimidine.. It catalyses the reaction 2'-deoxyribonucleotide-(2'-deoxyribose 5'-phosphate)-2'-deoxyribonucleotide-DNA = a 3'-end 2'-deoxyribonucleotide-(2,3-dehydro-2,3-deoxyribose 5'-phosphate)-DNA + a 5'-end 5'-phospho-2'-deoxyribonucleoside-DNA + H(+). In terms of biological role, involved in base excision repair of DNA damaged by oxidation or by mutagenic agents. Acts as a DNA glycosylase that recognizes and removes damaged bases. Has a preference for oxidized purines, such as 7,8-dihydro-8-oxoguanine (8-oxoG). Has AP (apurinic/apyrimidinic) lyase activity and introduces nicks in the DNA strand. Cleaves the DNA backbone by beta-delta elimination to generate a single-strand break at the site of the removed base with both 3'- and 5'-phosphates. This is Formamidopyrimidine-DNA glycosylase from Caulobacter sp. (strain K31).